The primary structure comprises 370 residues: 3-isopropylmalate dehydrogenase (370 aa).

77–90 (GPKWDGVPYDARPE) lines the NAD(+) pocket. Substrate is bound by residues arginine 97, arginine 107, arginine 135, and aspartate 226. Mg(2+)-binding residues include aspartate 226, aspartate 250, and aspartate 254. 290 to 302 (GSAPDIAGKGMAN) provides a ligand contact to NAD(+).

This sequence belongs to the isocitrate and isopropylmalate dehydrogenases family. LeuB type 1 subfamily. Homodimer. Mg(2+) is required as a cofactor. It depends on Mn(2+) as a cofactor.

The protein localises to the cytoplasm. It catalyses the reaction (2R,3S)-3-isopropylmalate + NAD(+) = 4-methyl-2-oxopentanoate + CO2 + NADH. It participates in amino-acid biosynthesis; L-leucine biosynthesis; L-leucine from 3-methyl-2-oxobutanoate: step 3/4. Catalyzes the oxidation of 3-carboxy-2-hydroxy-4-methylpentanoate (3-isopropylmalate) to 3-carboxy-4-methyl-2-oxopentanoate. The product decarboxylates to 4-methyl-2 oxopentanoate. In Rhodopseudomonas palustris (strain ATCC BAA-98 / CGA009), this protein is 3-isopropylmalate dehydrogenase.